The primary structure comprises 176 residues: NAD(P)H-quinone oxidoreductase subunit 6, chloroplastic (176 aa).

Helical transmembrane passes span 10–30 (FLLVFLGLGLILGGLGVVLLP), 32–52 (PIYSAFSLGLVFVCISLFYIL), 61–81 (AQLLIYVGAINVLIIFAVMFI), 92–112 (LWTVGDGITSVVCTSLFVSLI), and 152–172 (FFLPFEFISIILLVALIGAIA).

It belongs to the complex I subunit 6 family. As to quaternary structure, NDH is composed of at least 16 different subunits, 5 of which are encoded in the nucleus.

The protein localises to the plastid. The protein resides in the chloroplast thylakoid membrane. It catalyses the reaction a plastoquinone + NADH + (n+1) H(+)(in) = a plastoquinol + NAD(+) + n H(+)(out). It carries out the reaction a plastoquinone + NADPH + (n+1) H(+)(in) = a plastoquinol + NADP(+) + n H(+)(out). NDH shuttles electrons from NAD(P)H:plastoquinone, via FMN and iron-sulfur (Fe-S) centers, to quinones in the photosynthetic chain and possibly in a chloroplast respiratory chain. The immediate electron acceptor for the enzyme in this species is believed to be plastoquinone. Couples the redox reaction to proton translocation, and thus conserves the redox energy in a proton gradient. The sequence is that of NAD(P)H-quinone oxidoreductase subunit 6, chloroplastic (ndhG) from Lactuca sativa (Garden lettuce).